Consider the following 284-residue polypeptide: ATP phosphoribosyltransferase (284 aa).

It belongs to the ATP phosphoribosyltransferase family. Long subfamily. Equilibrium between an active dimeric form, an inactive hexameric form and higher aggregates. Interconversion between the various forms is largely reversible and is influenced by the natural substrates and inhibitors of the enzyme. The cofactor is Mg(2+).

The protein resides in the cytoplasm. It catalyses the reaction 1-(5-phospho-beta-D-ribosyl)-ATP + diphosphate = 5-phospho-alpha-D-ribose 1-diphosphate + ATP. Its pathway is amino-acid biosynthesis; L-histidine biosynthesis; L-histidine from 5-phospho-alpha-D-ribose 1-diphosphate: step 1/9. Its activity is regulated as follows. Feedback inhibited by histidine. Functionally, catalyzes the condensation of ATP and 5-phosphoribose 1-diphosphate to form N'-(5'-phosphoribosyl)-ATP (PR-ATP). Has a crucial role in the pathway because the rate of histidine biosynthesis seems to be controlled primarily by regulation of HisG enzymatic activity. This is ATP phosphoribosyltransferase from Mycobacterium avium (strain 104).